Here is a 432-residue protein sequence, read N- to C-terminus: Guanine nucleotide-binding protein subunit alpha (432 aa).

The tract at residues 1–97 (MGGCMSTPEA…SKGNKDRSNQ (97 aa)) is disordered. The N-myristoyl glycine moiety is linked to residue glycine 2. The S-palmitoyl cysteine moiety is linked to residue cysteine 4. Positions 21–52 (PSTSTSSRPPQASTSATATAAGAGTSAANGTA) are enriched in low complexity. Residues 111–432 (KECKILLLGS…QNALRDSGIL (322 aa)) enclose the G-alpha domain. The segment at 114 to 127 (KILLLGSGESGKST) is G1 motif. Residues glutamate 122, serine 123, glycine 124, lysine 125, serine 126, threonine 127, aspartate 230, leucine 255, threonine 261, glycine 283, asparagine 349, lysine 350, aspartate 352, and alanine 404 each contribute to the GTP site. A Mg(2+)-binding site is contributed by serine 126. The tract at residues 253–261 (DVLRARTKT) is G2 motif. Threonine 261 contacts Mg(2+). The segment at 276–285 (IHMFDVGGQR) is G3 motif. The segment at 345–352 (ILFLNKID) is G4 motif. Residues 402–407 (TQATDT) form a G5 motif region.

Belongs to the G-alpha family. As to quaternary structure, g proteins are composed of 3 units; alpha, beta and gamma. The alpha chain contains the guanine nucleotide binding site. The cofactor is Mg(2+).

In terms of biological role, guanine nucleotide-binding proteins (G proteins) are involved as modulators or transducers in various transmembrane signaling systems. Involved in the mating pathway. This chain is Guanine nucleotide-binding protein subunit alpha (GPA1), found in Cryptococcus neoformans var. neoformans serotype D (strain B-3501A) (Filobasidiella neoformans).